The following is a 984-amino-acid chain: MYCBP-associated protein (984 aa).

Disordered stretches follow at residues L61–E88 and G218–N240. The segment covering G218 to P231 has biased composition (basic and acidic residues). T613 is subject to Phosphothreonine. The residue at position 619 (S619) is a Phosphoserine. Disordered regions lie at residues S693–M729 and P842–D917. Residues A862 to V910 are compositionally biased toward basic and acidic residues.

In terms of assembly, interacts with MYCBP. Expressed specifically in testis.

It localises to the cytoplasm. It is found in the membrane. In terms of biological role, may play a role in spermatogenesis. May be involved in synaptic processes. The polypeptide is MYCBP-associated protein (Homo sapiens (Human)).